Here is a 514-residue protein sequence, read N- to C-terminus: Probable peptidoglycan glycosyltransferase FtsW (514 aa).

9 helical membrane-spanning segments follow: residues 45-65, 86-106, 108-128, 137-157, 182-202, 218-238, 301-321, 347-367, and 373-393; these read IGLI…VTSA, IYIV…MQFW, TANP…LLVG, WLAL…FFFT, VVFF…TVVV, LWQF…LIVF, ILAE…ILWM, VGIW…GILP, and LPLV…VALL. Disordered regions lie at residues 411–437 and 449–501; these read GDNK…RTKH and DYNQ…AGIK.

Belongs to the SEDS family. FtsW subfamily.

It localises to the cell inner membrane. It catalyses the reaction [GlcNAc-(1-&gt;4)-Mur2Ac(oyl-L-Ala-gamma-D-Glu-L-Lys-D-Ala-D-Ala)](n)-di-trans,octa-cis-undecaprenyl diphosphate + beta-D-GlcNAc-(1-&gt;4)-Mur2Ac(oyl-L-Ala-gamma-D-Glu-L-Lys-D-Ala-D-Ala)-di-trans,octa-cis-undecaprenyl diphosphate = [GlcNAc-(1-&gt;4)-Mur2Ac(oyl-L-Ala-gamma-D-Glu-L-Lys-D-Ala-D-Ala)](n+1)-di-trans,octa-cis-undecaprenyl diphosphate + di-trans,octa-cis-undecaprenyl diphosphate + H(+). The protein operates within cell wall biogenesis; peptidoglycan biosynthesis. Functionally, peptidoglycan polymerase that is essential for cell division. This chain is Probable peptidoglycan glycosyltransferase FtsW, found in Alteromonas naphthalenivorans.